A 1438-amino-acid polypeptide reads, in one-letter code: DNA polymerase III PolC-type (1438 aa).

The Exonuclease domain occupies 422 to 578; that stretch reads YVVFDVETTG…YDTEATAYIF (157 aa).

Belongs to the DNA polymerase type-C family. PolC subfamily.

It is found in the cytoplasm. It carries out the reaction DNA(n) + a 2'-deoxyribonucleoside 5'-triphosphate = DNA(n+1) + diphosphate. In terms of biological role, required for replicative DNA synthesis. This DNA polymerase also exhibits 3' to 5' exonuclease activity. This is DNA polymerase III PolC-type from Staphylococcus aureus (strain MSSA476).